Reading from the N-terminus, the 105-residue chain is uncharacterized protein (105 aa).

This is an uncharacterized protein from Escherichia coli (strain K12).